A 999-amino-acid chain; its full sequence is Protein Smaug (999 aa).

Polar residues predominate over residues 1–36 (MKYATGTDNAMTSGISGQTNNSNSASNEMQPTTSTP). Disordered stretches follow at residues 1-69 (MKYA…QSQP) and 329-349 (LCPASGSRSSRTNDWQTIAPP). 2 stretches are compositionally biased toward low complexity: residues 44–69 (TSTATTTATYANGNPNSNANPSQSQP) and 329–338 (LCPASGSRSS). S564 and S575 each carry phosphoserine. Residues 583–763 (EFKPNYIKFH…KDLKFKLSKM (181 aa)) form an interaction with cup region. One can recognise an SAM domain in the interval 600-654 (GIGLWLKSLRLHKYIELFKNMTYEEMLLITEDFLQSVGVTKGASHKLALCIDKLK). Disordered stretches follow at residues 773–892 (HVKP…MQQM) and 955–977 (QQSQQQQQQRKLSGGVSSAEQQP). Composition is skewed to polar residues over residues 801–822 (KNGSNDRINNRKNSNDMLNFSL) and 854–864 (HQPQYKSSSYP). Position 972 is a phosphoserine (S972).

Belongs to the SMAUG family. As to quaternary structure, interacts with oskar (osk). Binds to the 3'-UTR of nanos (nos). Interacts with cup, which in turn recruits eIF4-E, leading to an indirect interaction between smg and eIF4-E that prevents mRNA translation. Forms a complex with aub, twin, AGO3, nanos mRNA and piRNAs that targets the nanos 3'-untranslated region, in early embryos. In terms of tissue distribution, at syncytial blastoderm, it is located throughout the bulk cytoplasm and pole plasm. By the time of cellularization, it concentrates at the posterior pole.

It is found in the cytoplasm. In terms of biological role, translation regulator that binds to the 3'-UTR of specific mRNAs such as nanos (nos) and prevents their translation. Prevents translation of unlocalized nanos in the bulk cytoplasm via the recruitment of cup. The polypeptide is Protein Smaug (smg) (Drosophila melanogaster (Fruit fly)).